A 439-amino-acid chain; its full sequence is MISALFLMNGKGEVLISRIYRDDISRGVANAFRLEVIGSQETRSPVKLIGSTSFMYIKVGNIYIVGVSRQNVNACMVFEVLHQLVDIFKSYFDNLDEDSIRNNFVLVYELLDEILDFGYPQNCSTDVLKLYITQGQGKLKSLDKLKQDKISKITIQATGTTPWRTPDIKYKRNELYIDVVESVNLLMSAEGNILRADVSGQVMMKCFLSGMPECKFGMNDKVIMDREKSTNGGSAARSGARRANGIEIDDITFHQCVRLGKFDSDRTVSFIPPDGEFELMRYRTTEHINLPFKVIPIVREMGRTRLECSVTVKSNFSSKMFGANVKVIIPTPKNTAVCKIVVAAGKAKYMPEQDAIIWRIRRFPGDTEFTLRAEVELMASVNLDKKAWSRPPISMEFQVTMFTASGFSVRFLKVVEKSNYTPIKWVRYLTKAGTYQNRI.

Residues 172-438 enclose the MHD domain; it reads RNELYIDVVE…LTKAGTYQNR (267 aa).

Belongs to the adaptor complexes medium subunit family. As to quaternary structure, adaptor protein complex 2 (AP-2) is a heterotetramer composed of two large adaptins (alpha-type and beta-type subunits), a medium adaptin (mu-type subunit AP50) and a small adaptin (sigma-type subunit AP17). In terms of processing, phosphorylated.

The protein localises to the cell membrane. It localises to the membrane. It is found in the coated pit. In terms of biological role, component of the adaptor complexes which link clathrin to receptors in coated vesicles. Clathrin-associated protein complexes are believed to interact with the cytoplasmic tails of membrane proteins, leading to their selection and concentration. AP50 is a subunit of the plasma membrane adaptor. The polypeptide is AP-2 complex subunit mu (apm2) (Dictyostelium discoideum (Social amoeba)).